Consider the following 633-residue polypeptide: tRNA uridine 5-carboxymethylaminomethyl modification enzyme MnmG (633 aa).

An FAD-binding site is contributed by G13–G18. Residue G273–F287 participates in NAD(+) binding.

This sequence belongs to the MnmG family. Homodimer. Heterotetramer of two MnmE and two MnmG subunits. It depends on FAD as a cofactor.

The protein resides in the cytoplasm. NAD-binding protein involved in the addition of a carboxymethylaminomethyl (cmnm) group at the wobble position (U34) of certain tRNAs, forming tRNA-cmnm(5)s(2)U34. In Pseudoalteromonas atlantica (strain T6c / ATCC BAA-1087), this protein is tRNA uridine 5-carboxymethylaminomethyl modification enzyme MnmG.